Reading from the N-terminus, the 545-residue chain is CTP synthase (545 aa).

The segment at Thr-2–Leu-266 is amidoligase domain. Ser-14 serves as a coordination point for CTP. Residue Ser-14 participates in UTP binding. ATP is bound by residues Ser-15 to Ile-20 and Asp-72. The Mg(2+) site is built by Asp-72 and Glu-140. CTP contacts are provided by residues Asp-147–Glu-149, Lys-187–Gln-192, and Lys-223. UTP is bound by residues Lys-187–Gln-192 and Lys-223. Lys-239 to Val-241 serves as a coordination point for ATP. The region spanning Thr-291–Arg-542 is the Glutamine amidotransferase type-1 domain. Residue Gly-352 coordinates L-glutamine. Cys-379 (nucleophile; for glutamine hydrolysis) is an active-site residue. L-glutamine is bound by residues Leu-380–Gln-383, Glu-403, and Arg-470. Residues His-515 and Glu-517 contribute to the active site.

It belongs to the CTP synthase family. In terms of assembly, homotetramer.

It catalyses the reaction UTP + L-glutamine + ATP + H2O = CTP + L-glutamate + ADP + phosphate + 2 H(+). The catalysed reaction is L-glutamine + H2O = L-glutamate + NH4(+). It carries out the reaction UTP + NH4(+) + ATP = CTP + ADP + phosphate + 2 H(+). It functions in the pathway pyrimidine metabolism; CTP biosynthesis via de novo pathway; CTP from UDP: step 2/2. With respect to regulation, allosterically activated by GTP, when glutamine is the substrate; GTP has no effect on the reaction when ammonia is the substrate. The allosteric effector GTP functions by stabilizing the protein conformation that binds the tetrahedral intermediate(s) formed during glutamine hydrolysis. Inhibited by the product CTP, via allosteric rather than competitive inhibition. Its function is as follows. Catalyzes the ATP-dependent amination of UTP to CTP with either L-glutamine or ammonia as the source of nitrogen. Regulates intracellular CTP levels through interactions with the four ribonucleotide triphosphates. The protein is CTP synthase of Salmonella typhi.